Reading from the N-terminus, the 762-residue chain is Serine/threonine-protein kinase PLK4 (762 aa).

The region spanning 14–268 (YEVQHLLGKG…LEQVLRHPFM (255 aa)) is the Protein kinase domain. Residues 20-28 (LGKGGFACV) and lysine 43 contribute to the ATP site. Aspartate 139 acts as the Proton acceptor in catalysis. In terms of domain architecture, Cryptic POLO box 1 (CPB1) spans 383 to 498 (AECISMPPLN…ARFVSLVKSK (116 aa)). One can recognise a Cryptic POLO box 2 (CPB2) domain in the interval 499 to 602 (TPKVTYFSGL…GRRPTPEVMP (104 aa)). Residues 657–736 (PIKRLNVPGV…LPQVQMKLKS (80 aa)) enclose the POLO box domain.

The protein belongs to the protein kinase superfamily. Ser/Thr protein kinase family. CDC5/Polo subfamily. Homodimer. Post-translationally, ubiquitinated by the SCF(Slimb) ubiquitin ligase complex; leading to its degradation by the proteasome during interphase and regulating centriole number and ensuring the block to centriole reduplication.

It is found in the cytoplasm. Its subcellular location is the cytoskeleton. The protein resides in the microtubule organizing center. The protein localises to the centrosome. It localises to the centriole. It catalyses the reaction L-seryl-[protein] + ATP = O-phospho-L-seryl-[protein] + ADP + H(+). The catalysed reaction is L-threonyl-[protein] + ATP = O-phospho-L-threonyl-[protein] + ADP + H(+). Serine/threonine-protein kinase that plays a central role in centriole duplication. Able to trigger procentriole formation on the surface of the mother centriole cylinder, using mother centriole as a platform, leading to the recruitment of centriole biogenesis proteins such as sas-6. When overexpressed, it is able to induce centrosome amplification through the simultaneous generation of multiple procentrioles adjoining each parental centriole during S phase. Centrosome amplification following overexpression can initiate tumorigenesis, highlighting the importance of centrosome regulation in cancers. The polypeptide is Serine/threonine-protein kinase PLK4 (SAK) (Drosophila grimshawi (Hawaiian fruit fly)).